Reading from the N-terminus, the 704-residue chain is Pentatricopeptide repeat-containing protein At1g56690, mitochondrial (704 aa).

The N-terminal 12 residues, 1 to 12 (MKRLKLILRRTY), are a transit peptide targeting the mitochondrion. PPR repeat units follow at residues 16–46 (TGVN…LQFK), 47–81 (AIGS…NVVS), 82–108 (WNGL…MPER), 109–143 (NVVS…NEVS), 144–170 (WTVM…MPVK), 171–205 (DVVA…NVVT), 206–232 (WTTM…MPEK), 233–267 (TEVS…PVIA), 268–294 (CNAM…MEDR), 295–329 (DNAT…GVRP), 330–364 (SFPS…QFDD), 365–395 (DVYV…FSSK), 396–430 (DIIM…GTMP), 431–465 (NKVT…FCVT), and 467–497 (TVEH…MTIK). The type E motif stretch occupies residues 502–577 (VWGALLGACK…FPGCSWIEVG (76 aa)). Positions 578–609 (KKVHMFTRGGIKNHPEQAMILMMLEKTDGLLR) are type E(+) motif. The segment at 610 to 704 (EAGYSPDCSH…NGECSCRDYW (95 aa)) is type DYW motif.

Belongs to the PPR family. PCMP-H subfamily.

The protein resides in the mitochondrion. The sequence is that of Pentatricopeptide repeat-containing protein At1g56690, mitochondrial (PCMP-H69) from Arabidopsis thaliana (Mouse-ear cress).